The chain runs to 524 residues: Phosphoenolpyruvate carboxykinase (ATP) (524 aa).

Arg-52, Tyr-188, and Lys-194 together coordinate substrate. Residues Lys-194, His-213, and 229-237 each bind ATP; that span reads GLSGTGKTT. The Mn(2+) site is built by Lys-194 and His-213. Asp-250 contacts Mn(2+). Residues Glu-278, Arg-314, and Thr-439 each contribute to the ATP site. Arg-314 is a substrate binding site.

It belongs to the phosphoenolpyruvate carboxykinase (ATP) family. Mn(2+) is required as a cofactor.

The protein localises to the cytoplasm. The catalysed reaction is oxaloacetate + ATP = phosphoenolpyruvate + ADP + CO2. It functions in the pathway carbohydrate biosynthesis; gluconeogenesis. Functionally, involved in the gluconeogenesis. Catalyzes the conversion of oxaloacetate (OAA) to phosphoenolpyruvate (PEP) through direct phosphoryl transfer between the nucleoside triphosphate and OAA. In Campylobacter jejuni subsp. doylei (strain ATCC BAA-1458 / RM4099 / 269.97), this protein is Phosphoenolpyruvate carboxykinase (ATP).